A 332-amino-acid polypeptide reads, in one-letter code: L-lactate dehydrogenase A chain (332 aa).

NAD(+) is bound by residues 29–57 (GMVG…MEDK) and Arg-99. Arg-106, Asn-138, and Arg-169 together coordinate substrate. Position 138 (Asn-138) interacts with NAD(+). The Proton acceptor role is filled by His-193. Substrate is bound at residue Thr-248.

This sequence belongs to the LDH/MDH superfamily. LDH family. As to quaternary structure, homotetramer.

Its subcellular location is the cytoplasm. The catalysed reaction is (S)-lactate + NAD(+) = pyruvate + NADH + H(+). The protein operates within fermentation; pyruvate fermentation to lactate; (S)-lactate from pyruvate: step 1/1. Interconverts simultaneously and stereospecifically pyruvate and lactate with concomitant interconversion of NADH and NAD(+). The protein is L-lactate dehydrogenase A chain (ldha) of Sphyraena argentea (Pacific barracuda).